The chain runs to 380 residues: Histidinol-phosphate aminotransferase (380 aa).

The residue at position 235 (K235) is an N6-(pyridoxal phosphate)lysine.

It belongs to the class-II pyridoxal-phosphate-dependent aminotransferase family. Histidinol-phosphate aminotransferase subfamily. In terms of assembly, homodimer. Pyridoxal 5'-phosphate serves as cofactor.

The enzyme catalyses L-histidinol phosphate + 2-oxoglutarate = 3-(imidazol-4-yl)-2-oxopropyl phosphate + L-glutamate. The protein operates within amino-acid biosynthesis; L-histidine biosynthesis; L-histidine from 5-phospho-alpha-D-ribose 1-diphosphate: step 7/9. This chain is Histidinol-phosphate aminotransferase, found in Rhodococcus jostii (strain RHA1).